The sequence spans 316 residues: GTP cyclohydrolase FolE2 2 (316 aa).

It belongs to the GTP cyclohydrolase IV family.

The catalysed reaction is GTP + H2O = 7,8-dihydroneopterin 3'-triphosphate + formate + H(+). It functions in the pathway cofactor biosynthesis; 7,8-dihydroneopterin triphosphate biosynthesis; 7,8-dihydroneopterin triphosphate from GTP: step 1/1. Its function is as follows. Converts GTP to 7,8-dihydroneopterin triphosphate. In Burkholderia orbicola (strain MC0-3), this protein is GTP cyclohydrolase FolE2 2.